We begin with the raw amino-acid sequence, 412 residues long: Tyrosine--tRNA ligase 1 (412 aa).

Tyr41 is a binding site for L-tyrosine. A 'HIGH' region motif is present at residues 46–55 (ATADSLHVGH). Residues Tyr174 and Gln178 each coordinate L-tyrosine. The 'KMSKS' region signature appears at 234–238 (KMGKS). Position 237 (Lys237) interacts with ATP. In terms of domain architecture, S4 RNA-binding spans 348–411 (LSLTDLLLEH…KKQHLHLRLE (64 aa)).

It belongs to the class-I aminoacyl-tRNA synthetase family. TyrS type 1 subfamily. As to quaternary structure, homodimer.

The protein localises to the cytoplasm. It carries out the reaction tRNA(Tyr) + L-tyrosine + ATP = L-tyrosyl-tRNA(Tyr) + AMP + diphosphate + H(+). Functionally, catalyzes the attachment of tyrosine to tRNA(Tyr) in a two-step reaction: tyrosine is first activated by ATP to form Tyr-AMP and then transferred to the acceptor end of tRNA(Tyr). The chain is Tyrosine--tRNA ligase 1 from Pseudomonas aeruginosa (strain ATCC 15692 / DSM 22644 / CIP 104116 / JCM 14847 / LMG 12228 / 1C / PRS 101 / PAO1).